The chain runs to 403 residues: Guanine nucleotide-binding protein alpha-8 subunit (403 aa).

Glycine 2 carries the N-myristoyl glycine lipid modification. The S-palmitoyl cysteine moiety is linked to residue cysteine 3. One can recognise a G-alpha domain in the interval 31 to 356 (LDFRILLLGA…KVLMKATKDL (326 aa)). The segment at 34–47 (RILLLGAGESGKST) is G1 motif. Residues 39–46 (GAGESGKS), 174–180 (IMTRVRT), 199–203 (DVGGQ), 268–271 (NKKD), and alanine 324 each bind GTP. The Mg(2+) site is built by serine 46 and threonine 180. The tract at residues 172-180 (DCIMTRVRT) is G2 motif. A G3 motif region spans residues 195-204 (FRVVDVGGQR). Residues 264–271 (FLVLNKKD) form a G4 motif region. The interval 322–327 (IAARYK) is G5 motif. Positions 353 to 403 (TKDLKKSSKQSSKSSLGNSTQNNSNNNNNNNNSNNNNGQTTIDGATAKINS) are disordered. Low complexity predominate over residues 374–389 (NNSNNNNNNNNSNNNN). Polar residues predominate over residues 390 to 403 (GQTTIDGATAKINS).

Belongs to the G-alpha family. In terms of assembly, g proteins are composed of 3 units; alpha, beta and gamma. The alpha chain contains the guanine nucleotide binding site.

Guanine nucleotide-binding proteins (G proteins) are involved as modulators or transducers in various transmembrane signaling systems. G alpha-8 is a potential analog for the G(s)-like G-proteins which stimulate adenylate cyclase in mammals. The polypeptide is Guanine nucleotide-binding protein alpha-8 subunit (gpaH) (Dictyostelium discoideum (Social amoeba)).